A 471-amino-acid chain; its full sequence is Glutamate--tRNA ligase (471 aa).

A 'HIGH' region motif is present at residues 9-19; it reads PSPTGYLHVGG. Positions 98, 100, 125, and 127 each coordinate Zn(2+). The 'KMSKS' region signature appears at 237–241; sequence KLSKR. Lys240 is a binding site for ATP.

This sequence belongs to the class-I aminoacyl-tRNA synthetase family. Glutamate--tRNA ligase type 1 subfamily. In terms of assembly, monomer. It depends on Zn(2+) as a cofactor.

It is found in the cytoplasm. It carries out the reaction tRNA(Glu) + L-glutamate + ATP = L-glutamyl-tRNA(Glu) + AMP + diphosphate. Its function is as follows. Catalyzes the attachment of glutamate to tRNA(Glu) in a two-step reaction: glutamate is first activated by ATP to form Glu-AMP and then transferred to the acceptor end of tRNA(Glu). This chain is Glutamate--tRNA ligase, found in Escherichia coli O157:H7.